The primary structure comprises 770 residues: Glutamate carboxypeptidase 2 homolog (770 aa).

Over 1–25 (MPYVGVGAQTVSTSLTGAPMVKAYI) the chain is Cytoplasmic. A helical; Signal-anchor for type II membrane protein transmembrane segment spans residues 26-42 (AIAASLIFVFCIAALGV). The Extracellular segment spans residues 43-770 (HHSERKFNKF…CVVNTLRDVI (728 aa)). N-linked (GlcNAc...) asparagine glycans are attached at residues N175 and N337. Residues 282–597 (SKKELFKGRT…QYWAELAKTF (316 aa)) are catalytic. Positions 387 and 397 each coordinate Zn(2+). The N-linked (GlcNAc...) asparagine glycan is linked to N417. Residue E435 is the Nucleophile of the active site. Zn(2+)-binding residues include E436 and D464. 3 N-linked (GlcNAc...) asparagine glycosylation sites follow: N469, N546, and N551. H562 serves as a coordination point for Zn(2+). Residues N579, N606, and N630 are each glycosylated (N-linked (GlcNAc...) asparagine).

This sequence belongs to the peptidase M28 family. M28B subfamily. Requires Zn(2+) as cofactor.

It is found in the membrane. It catalyses the reaction Release of an unsubstituted, C-terminal glutamyl residue, typically from Ac-Asp-Glu or folylpoly-gamma-glutamates.. The polypeptide is Glutamate carboxypeptidase 2 homolog (Caenorhabditis elegans).